The primary structure comprises 505 residues: Glutamyl-tRNA(Gln) amidotransferase subunit A (505 aa).

Catalysis depends on charge relay system residues Lys-80 and Ser-155. Residue Ser-179 is the Acyl-ester intermediate of the active site.

Belongs to the amidase family. GatA subfamily. As to quaternary structure, heterotrimer of A, B and C subunits.

The enzyme catalyses L-glutamyl-tRNA(Gln) + L-glutamine + ATP + H2O = L-glutaminyl-tRNA(Gln) + L-glutamate + ADP + phosphate + H(+). Functionally, allows the formation of correctly charged Gln-tRNA(Gln) through the transamidation of misacylated Glu-tRNA(Gln) in organisms which lack glutaminyl-tRNA synthetase. The reaction takes place in the presence of glutamine and ATP through an activated gamma-phospho-Glu-tRNA(Gln). In Acidothermus cellulolyticus (strain ATCC 43068 / DSM 8971 / 11B), this protein is Glutamyl-tRNA(Gln) amidotransferase subunit A.